Here is a 794-residue protein sequence, read N- to C-terminus: Sucrose synthase (794 aa).

Residues 263–742 (MISRLLILSP…ALDRVASRYT (480 aa)) form a GT-B glycosyltransferase region.

This sequence belongs to the glycosyltransferase 1 family. In terms of assembly, homotetramer.

The enzyme catalyses an NDP-alpha-D-glucose + D-fructose = a ribonucleoside 5'-diphosphate + sucrose + H(+). The catalysed reaction is ADP-alpha-D-glucose + D-fructose = sucrose + ADP + H(+). With respect to regulation, inhibited by GDP over 10 mM and by over 2 mM MgCl(2). In terms of biological role, catalyzes the reversible conversion of sucrose and a nucleotide disphosphate (NDP) into fructose and NDP-glucose; although the reaction is freely reversible in vitro, the physiological reaction seems to be sucrose cleavage. Unlike characterized plant enzymes prefers ADP as a cosubstrate, whereas plants prefer UDP. The KM for sucrose is 8-fold lower in the presence of ADP than UDP. Its preference for ADP over UDP suggests it may directly link sucrose and glycogen metabolism. This is Sucrose synthase (ss2) from Nitrosomonas europaea (strain ATCC 19718 / CIP 103999 / KCTC 2705 / NBRC 14298).